The primary structure comprises 587 residues: Aspartate--tRNA ligase (587 aa).

Glu174 is an L-aspartate binding site. The aspartate stretch occupies residues 198-201 (QITK). Arg220 contacts L-aspartate. ATP is bound by residues 220–222 (RDE) and Gln229. Residue His443 participates in L-aspartate binding. Position 477 (Glu477) interacts with ATP. Residue Arg484 participates in L-aspartate binding. 529–532 (GLDR) contacts ATP.

Belongs to the class-II aminoacyl-tRNA synthetase family. Type 1 subfamily. Homodimer.

It is found in the cytoplasm. The catalysed reaction is tRNA(Asp) + L-aspartate + ATP = L-aspartyl-tRNA(Asp) + AMP + diphosphate. Catalyzes the attachment of L-aspartate to tRNA(Asp) in a two-step reaction: L-aspartate is first activated by ATP to form Asp-AMP and then transferred to the acceptor end of tRNA(Asp). This chain is Aspartate--tRNA ligase, found in Streptococcus pneumoniae (strain Hungary19A-6).